A 1337-amino-acid chain; its full sequence is Aldehyde oxidase 4 (1337 aa).

The 88-residue stretch at 4–91 (DDLVFAVNGE…GCSITTSDGL (88 aa)) folds into the 2Fe-2S ferredoxin-type domain. Cysteine 43, cysteine 48, cysteine 51, cysteine 73, cysteine 113, cysteine 116, cysteine 155, and cysteine 157 together coordinate [2Fe-2S] cluster. An FAD-binding PCMH-type domain is found at 225 to 409 (LDQTRYHWST…LKVHIPRWIA (185 aa)). FAD-binding positions include 259–266 (LVVGNTGT), 342–346 (SIGGN), aspartate 358, and leucine 399. Positions 771, 802, and 915 each coordinate Mo-molybdopterin. Glutamate 1265 serves as the catalytic Proton acceptor.

This sequence belongs to the xanthine dehydrogenase family. In terms of assembly, aldehyde oxidases (AO) are homodimers and heterodimers of AO subunits. [2Fe-2S] cluster is required as a cofactor. FAD serves as cofactor. It depends on Mo-molybdopterin as a cofactor. As to expression, transcripts expressed at high levels in developing siliques and at low levels in dry seeds.

Its subcellular location is the cytoplasm. It carries out the reaction indole-3-acetaldehyde + O2 + H2O = (indol-3-yl)acetate + H2O2 + H(+). It catalyses the reaction an aldehyde + O2 + H2O = a carboxylate + H2O2 + H(+). The enzyme catalyses benzaldehyde + O2 + H2O = benzoate + H2O2 + H(+). The catalysed reaction is hexanal + O2 + H2O = hexanoate + H2O2 + H(+). It carries out the reaction 1-naphthaldehyde + O2 + H2O = 1-naphthoate + H2O2 + H(+). It catalyses the reaction vanillin + O2 + H2O = vanillate + H2O2 + H(+). The enzyme catalyses malonaldehyde + O2 + H2O = 3-oxopropanoate + H2O2 + H(+). The catalysed reaction is citral + O2 + H2O = 3,7-dimethylocta-2,6-dienoate + H2O2 + H(+). It carries out the reaction acrolein + O2 + H2O = acrylate + H2O2 + H(+). It catalyses the reaction (E)-4-hydroxynon-2-enal + O2 + H2O = (E)-4-hydroxynon-2-enoate + H2O2 + H(+). The enzyme catalyses (E)-cinnamaldehyde + O2 + H2O = (E)-cinnamate + H2O2 + H(+). The catalysed reaction is indole-3-carbaldehyde + O2 + H2O = indole-3-carboxylate + H2O2 + H(+). It carries out the reaction propanal + O2 + H2O = propanoate + H2O2 + H(+). It catalyses the reaction dodecanal + O2 + H2O = dodecanoate + H2O2 + H(+). The enzyme catalyses salicylaldehyde + O2 + H2O = salicylate + H2O2 + H(+). With respect to regulation, inhibited by Cu(2+). Aldehyde oxidase with a broad substrate specificity. Involved in the accumulation of benzoic acid (BA) in siliques. Delays and protects siliques from senescence by catalyzing aldehyde detoxification in siliques. Catalyzes the oxidation of an array of aromatic and aliphatic aldehydes, including vanillin and the reactive carbonyl species (RCS) acrolein, 4-hydroxyl-2-nonenal (HNE), and malondialdehyde (MDA). The polypeptide is Aldehyde oxidase 4 (Arabidopsis thaliana (Mouse-ear cress)).